A 397-amino-acid polypeptide reads, in one-letter code: Elongation factor Tu (397 aa).

Residues 10 to 207 enclose the tr-type G domain; it reads KPHVNVGTIG…TLDAYIPEPE (198 aa). Positions 19 to 26 are G1; the sequence is GHVDHGKT. 19-26 serves as a coordination point for GTP; sequence GHVDHGKT. Thr26 contacts Mg(2+). Positions 60–64 are G2; it reads GITIA. A G3 region spans residues 81 to 84; that stretch reads DCPG. GTP is bound by residues 81–85 and 136–139; these read DCPGH and NKAD. Residues 136 to 139 are G4; that stretch reads NKAD. Residues 174–176 form a G5 region; sequence SAL.

This sequence belongs to the TRAFAC class translation factor GTPase superfamily. Classic translation factor GTPase family. EF-Tu/EF-1A subfamily. Monomer.

It is found in the cytoplasm. It catalyses the reaction GTP + H2O = GDP + phosphate + H(+). GTP hydrolase that promotes the GTP-dependent binding of aminoacyl-tRNA to the A-site of ribosomes during protein biosynthesis. The sequence is that of Elongation factor Tu from Hahella chejuensis (strain KCTC 2396).